A 167-amino-acid polypeptide reads, in one-letter code: Crossover junction endodeoxyribonuclease RuvC (167 aa).

Active-site residues include Asp7, Glu67, and Asp139. 3 residues coordinate Mg(2+): Asp7, Glu67, and Asp139.

Belongs to the RuvC family. In terms of assembly, homodimer which binds Holliday junction (HJ) DNA. The HJ becomes 2-fold symmetrical on binding to RuvC with unstacked arms; it has a different conformation from HJ DNA in complex with RuvA. In the full resolvosome a probable DNA-RuvA(4)-RuvB(12)-RuvC(2) complex forms which resolves the HJ. Mg(2+) serves as cofactor.

The protein resides in the cytoplasm. The enzyme catalyses Endonucleolytic cleavage at a junction such as a reciprocal single-stranded crossover between two homologous DNA duplexes (Holliday junction).. Its function is as follows. The RuvA-RuvB-RuvC complex processes Holliday junction (HJ) DNA during genetic recombination and DNA repair. Endonuclease that resolves HJ intermediates. Cleaves cruciform DNA by making single-stranded nicks across the HJ at symmetrical positions within the homologous arms, yielding a 5'-phosphate and a 3'-hydroxyl group; requires a central core of homology in the junction. The consensus cleavage sequence is 5'-(A/T)TT(C/G)-3'. Cleavage occurs on the 3'-side of the TT dinucleotide at the point of strand exchange. HJ branch migration catalyzed by RuvA-RuvB allows RuvC to scan DNA until it finds its consensus sequence, where it cleaves and resolves the cruciform DNA. The polypeptide is Crossover junction endodeoxyribonuclease RuvC (Akkermansia muciniphila (strain ATCC BAA-835 / DSM 22959 / JCM 33894 / BCRC 81048 / CCUG 64013 / CIP 107961 / Muc)).